A 103-amino-acid chain; its full sequence is Histone H4 (103 aa).

A compositionally biased stretch (gly residues) spans 1-14; that stretch reads MTGRGKGGKGLGKG. The segment at 1–20 is disordered; that stretch reads MTGRGKGGKGLGKGGAKRHR. 2 positions are modified to N6-acetyl-N6-methyllysine; alternate: K6 and K13. Residues 17 to 21 mediate DNA binding; it reads KRHRK.

This sequence belongs to the histone H4 family. The nucleosome is a histone octamer containing two molecules each of H2A, H2B, H3 and H4 assembled in one H3-H4 heterotetramer and two H2A-H2B heterodimers. The octamer wraps approximately 147 bp of DNA.

The protein resides in the nucleus. It localises to the chromosome. Core component of nucleosome. Nucleosomes wrap and compact DNA into chromatin, limiting DNA accessibility to the cellular machineries which require DNA as a template. Histones thereby play a central role in transcription regulation, DNA repair, DNA replication and chromosomal stability. DNA accessibility is regulated via a complex set of post-translational modifications of histones, also called histone code, and nucleosome remodeling. The sequence is that of Histone H4 from Trichogramma cacaeciae (Moth egg parasite).